A 281-amino-acid chain; its full sequence is Shikimate dehydrogenase (NADP(+)) (281 aa).

Shikimate is bound by residues 14–16 and Thr-61; that span reads SKS. Residue Lys-65 is the Proton acceptor of the active site. Shikimate is bound by residues Asn-86 and Asp-105. NADP(+) contacts are provided by residues 130–134, 154–159, and Met-221; these read GAGGA and NRTAAK. Tyr-223 contacts shikimate. Gly-245 lines the NADP(+) pocket.

This sequence belongs to the shikimate dehydrogenase family. As to quaternary structure, homodimer.

The enzyme catalyses shikimate + NADP(+) = 3-dehydroshikimate + NADPH + H(+). The protein operates within metabolic intermediate biosynthesis; chorismate biosynthesis; chorismate from D-erythrose 4-phosphate and phosphoenolpyruvate: step 4/7. Its function is as follows. Involved in the biosynthesis of the chorismate, which leads to the biosynthesis of aromatic amino acids. Catalyzes the reversible NADPH linked reduction of 3-dehydroshikimate (DHSA) to yield shikimate (SA). The chain is Shikimate dehydrogenase (NADP(+)) from Azoarcus sp. (strain BH72).